The chain runs to 1241 residues: ATP-dependent helicase/nuclease subunit A (1241 aa).

One can recognise a UvrD-like helicase ATP-binding domain in the interval 12–485; it reads SQWTDDQWKA…IDLAKNFRSR (474 aa). Residue 33–40 coordinates ATP; the sequence is AAAGSGKT. Residues 505–805 form the UvrD-like helicase C-terminal domain; the sequence is GEIDYDADAE…RIMTIHKSKG (301 aa).

This sequence belongs to the helicase family. AddA subfamily. In terms of assembly, heterodimer of AddA and AddB/RexB. It depends on Mg(2+) as a cofactor.

It catalyses the reaction Couples ATP hydrolysis with the unwinding of duplex DNA by translocating in the 3'-5' direction.. It carries out the reaction ATP + H2O = ADP + phosphate + H(+). The heterodimer acts as both an ATP-dependent DNA helicase and an ATP-dependent, dual-direction single-stranded exonuclease. Recognizes the chi site generating a DNA molecule suitable for the initiation of homologous recombination. The AddA nuclease domain is required for chi fragment generation; this subunit has the helicase and 3' -&gt; 5' nuclease activities. This chain is ATP-dependent helicase/nuclease subunit A, found in Bacillus cereus (strain ZK / E33L).